Reading from the N-terminus, the 147-residue chain is Heavy metal-dependent transcription regulator 1 (147 aa).

The 70-residue stretch at 1–70 (MNIGQASKVV…VEQIKDLLAL (70 aa)) folds into the HTH merR-type domain. Residues 3–22 (IGQASKVVSGVSSKMIRYYE) constitute a DNA-binding region (H-T-H motif).

It localises to the cytoplasm. Its function is as follows. Transcriptional regulator involved in acid tolerance. Binds copper. The polypeptide is Heavy metal-dependent transcription regulator 1 (hmrR1) (Rhizobium meliloti (strain 1021) (Ensifer meliloti)).